The following is a 288-amino-acid chain: MALFSKKDKYIRITPNNSLKSSVSRNVPEVPDELFAKCPACKHMIYQKDLGPAKICPTCSYNFRISAQERLTLTVDEGSFQELFTDIETKDPLRFPDYQAKLQKARQATGLHEAVLTGTALVKGQRLALAIMDSHFIMASMGTVVGEKITRLFELAISERLPVVIFTASGGARMQEGIMSLMQMAKVSAAIKKHSNAGLFYLTILTDPTTGGVTASFAMEGDMIIAEPQSLVGFAGRRVIETTVRENLPDDFQKAEFLKEHGFVDAIVKRTDLRDRIAHLVAFHGGVS.

The region spanning 34–288 (LFAKCPACKH…HLVAFHGGVS (255 aa)) is the CoA carboxyltransferase N-terminal domain. C38, C41, C56, and C59 together coordinate Zn(2+). The C4-type zinc-finger motif lies at 38–59 (CPACKHMIYQKDLGPAKICPTC).

Belongs to the AccD/PCCB family. In terms of assembly, acetyl-CoA carboxylase is a heterohexamer composed of biotin carboxyl carrier protein (AccB), biotin carboxylase (AccC) and two subunits each of ACCase subunit alpha (AccA) and ACCase subunit beta (AccD). Requires Zn(2+) as cofactor.

It localises to the cytoplasm. It carries out the reaction N(6)-carboxybiotinyl-L-lysyl-[protein] + acetyl-CoA = N(6)-biotinyl-L-lysyl-[protein] + malonyl-CoA. The protein operates within lipid metabolism; malonyl-CoA biosynthesis; malonyl-CoA from acetyl-CoA: step 1/1. Its function is as follows. Component of the acetyl coenzyme A carboxylase (ACC) complex. Biotin carboxylase (BC) catalyzes the carboxylation of biotin on its carrier protein (BCCP) and then the CO(2) group is transferred by the transcarboxylase to acetyl-CoA to form malonyl-CoA. This chain is Acetyl-coenzyme A carboxylase carboxyl transferase subunit beta, found in Streptococcus equi subsp. equi (strain 4047).